A 372-amino-acid chain; its full sequence is F-box/kelch-repeat protein At2g44630 (372 aa).

Residues 1-13 (MSNADEPPQKTNQ) show a composition bias toward polar residues. The segment at 1 to 21 (MSNADEPPQKTNQPPSSSLTP) is disordered. Residues 21-67 (PPSLFSLPVDIVLNILALVPKRYYPILCCVSKSLRSLIRSPEIHKTR) form the F-box domain. Kelch repeat units follow at residues 136–181 (EIYC…LVGG) and 183–228 (IYVI…SVSL).

The protein is F-box/kelch-repeat protein At2g44630 of Arabidopsis thaliana (Mouse-ear cress).